A 334-amino-acid chain; its full sequence is Transmembrane protein 41 homolog (334 aa).

Asn-43 is a glycosylation site (N-linked (GlcNAc...) asparagine). A disordered region spans residues 47-79; it reads KNKNNNIDNKKNSNNNNNNNNNNNNKNSISNNN. N-linked (GlcNAc...) asparagine glycosylation is present at Asn-83. Transmembrane regions (helical) follow at residues 97 to 117, 156 to 176, 192 to 214, 246 to 266, 269 to 289, and 305 to 325; these read LPLW…VFLF, FIVI…SIPG, VGFP…ISYY, IVFL…ASPL, VPIH…TFLA, and IFDL…ILPT.

Belongs to the TMEM41 family.

The protein resides in the membrane. This Dictyostelium discoideum (Social amoeba) protein is Transmembrane protein 41 homolog.